Reading from the N-terminus, the 151-residue chain is Ribosome maturation factor RimP (151 aa).

It belongs to the RimP family.

It localises to the cytoplasm. Functionally, required for maturation of 30S ribosomal subunits. The polypeptide is Ribosome maturation factor RimP (Haemophilus influenzae (strain PittEE)).